Consider the following 189-residue polypeptide: Large ribosomal subunit protein eL14 (189 aa).

It belongs to the eukaryotic ribosomal protein eL14 family.

Component of the large ribosomal subunit. The ribosome is a large ribonucleoprotein complex responsible for the synthesis of proteins in the cell. The polypeptide is Large ribosomal subunit protein eL14 (Trypanosoma brucei brucei).